A 386-amino-acid chain; its full sequence is Methionine aminopeptidase 1 (386 aa).

The C6H2-type zinc-finger motif lies at Thr6 to Lys59. Positions 9, 14, 22, 25, 36, 40, 48, and 52 each coordinate Zn(2+). His202 contacts a protein. Residues Asp219, Asp230, and His293 each coordinate Zn(2+). His300 serves as a coordination point for a protein. Residues Glu326 and Glu357 each coordinate Zn(2+).

This sequence belongs to the peptidase M24A family. Methionine aminopeptidase type 1 subfamily. In terms of assembly, associates with the 60S ribosomal subunit of the 80S translational complex. The cofactor is Zn(2+). It depends on Co(2+) as a cofactor. Requires Mn(2+) as cofactor. Fe(2+) serves as cofactor.

The protein resides in the cytoplasm. It catalyses the reaction Release of N-terminal amino acids, preferentially methionine, from peptides and arylamides.. In terms of biological role, cotranslationally removes the N-terminal methionine from nascent proteins. The N-terminal methionine is often cleaved when the second residue in the primary sequence is small and uncharged (Met-Ala-, Cys, Gly, Pro, Ser, Thr, or Val). This is Methionine aminopeptidase 1 (metap1) from Danio rerio (Zebrafish).